Reading from the N-terminus, the 117-residue chain is uncharacterized protein (117 aa).

Residues 1–19 are compositionally biased toward polar residues; it reads MTSNPSSSADQPLSGTTVP. The segment at 1 to 28 is disordered; the sequence is MTSNPSSSADQPLSGTTVPGSVPGKAPE. The next 2 helical transmembrane spans lie at 38–58 and 76–96; these read AAVW…LIFI and LPLG…TVFA.

Its subcellular location is the cell membrane. This is an uncharacterized protein from Mycobacterium tuberculosis (strain ATCC 25618 / H37Rv).